The chain runs to 451 residues: Tubulin gamma-2 chain (451 aa).

Position 131 is a phosphoserine; by BRSK1 (Ser131). Ala142 to Gly148 contacts GTP.

It belongs to the tubulin family. Component of the gamma-tubulin ring complex (gTuRC) consisting of TUBGCP2, TUBGCP3, TUBGCP4, TUBGCP5 and TUBGCP6 and gamma-tubulin TUBG1 or TUBG2. TUBGCP2, TUBGCP3, TUBGCP4, TUBGCP5 and TUBGCP6 assemble in a 5:5:2:1:1 stoichiometry; each is associated with a gamma-tubulin, thereby arranging 14 gamma-tubulins in a helical manner. Gamma-tubulin at the first position is blocked by TUBGCP3 at the last position, allowing 13 protafilaments to grow into a microtubule. Interacts with alpha-beta tubulin heterodimers; the interaction allows microtubules to nucleate from the gTuRC. Post-translationally, phosphorylation at Ser-131 by BRSK1 regulates centrosome duplication, possibly by mediating relocation of gamma-tubulin and its associated proteins from the cytoplasm to the centrosome.

It is found in the cytoplasm. It localises to the cytoskeleton. The protein resides in the microtubule organizing center. Its subcellular location is the centrosome. In terms of biological role, tubulin is the major constituent of microtubules, protein filaments consisting of alpha- and beta-tubulin heterodimers. Gamma-tubulin is a key component of the gamma-tubulin ring complex (gTuRC) which mediates microtubule nucleation. The gTuRC regulates the minus-end nucleation of alpha-beta tubulin heterodimers that grow into microtubule protafilaments, a critical step in centrosome duplication and spindle formation. In Bos taurus (Bovine), this protein is Tubulin gamma-2 chain (TUBG2).